Consider the following 501-residue polypeptide: Solute carrier family 2, facilitated glucose transporter member 5 (501 aa).

The residue at position 1 (M1) is an N-acetylmethionine. The Cytoplasmic segment spans residues 1–18 (MEQQDQSMKEGRLTLVLA). A helical transmembrane segment spans residues 19–39 (LATLIAAFGSSFQYGYNVAAV). Residue Y32 coordinates D-fructose. The Extracellular segment spans residues 40 to 68 (NSPALLMQQFYNETYYGRTGEFMEDFPLT). N51 is a glycosylation site (N-linked (GlcNAc...) asparagine). The helical transmembrane segment at 69-91 (LLWSVTVSMFPFGGFIGSLLVGP) threads the bilayer. The Cytoplasmic portion of the chain corresponds to 92–98 (LVNKFGR). The chain crosses the membrane as a helical span at residues 99–119 (KGALLFNNIFSIVPAILMGCS). At 120–126 (RVAKSFE) the chain is on the extracellular side. The chain crosses the membrane as a helical span at residues 127-149 (LIIISRLLVGICAGVSSNVVPMY). Topologically, residues 150 to 161 (LGELAPKNLRGA) are cytoplasmic. A helical membrane pass occupies residues 162-182 (LGVVPQLFITVGILVAQIFGL). Q167 is a D-fructose binding site. Residues 183–192 (RNLLANVDGW) are Extracellular-facing. Residues 193–213 (PILLGLTGVPAALQLVLLPFF) form a helical membrane-spanning segment. Residues 214–277 (PESPRYLLIQ…LFRMRSLRWQ (64 aa)) lie on the Cytoplasmic side of the membrane. Residues 278-298 (LLSIIVLMGGQQLSGVNAIYY) traverse the membrane as a helical segment. D-fructose is bound by residues Q288 and 296 to 298 (IYY). The Extracellular portion of the chain corresponds to 299 to 313 (YADQIYLSAGVPKEH). A helical membrane pass occupies residues 314–334 (VQFVTAGTGAVNVVMTFCAVF). Residues 335–342 (VVELLGRR) lie on the Cytoplasmic side of the membrane. A helical membrane pass occupies residues 343 to 363 (LLLLLGFSICLVACCVLTAAL). Topologically, residues 364–371 (ALQDTVSW) are extracellular. A helical membrane pass occupies residues 372-394 (MPYISIVCVISYVIGHALGPSPI). Position 387 (H387) interacts with D-fructose. The Cytoplasmic segment spans residues 395 to 412 (PALLITEIFLQSSRPSAF). The helical transmembrane segment at 413-433 (MVGGSVHWLSNFTVGLIFPFI) threads the bilayer. Residue 419–420 (HW) coordinates D-fructose. Residues 434-439 (QEGLGP) lie on the Extracellular side of the membrane. A helical transmembrane segment spans residues 440–460 (YSFIVFAVICLLTTIYIFLIV). Over 461–501 (PETKAKTFIEINQIFTKMNKVSEVYPEKEELKELPPVTLEQ) the chain is Cytoplasmic.

This sequence belongs to the major facilitator superfamily. Sugar transporter (TC 2.A.1.1) family. Glucose transporter subfamily.

The protein localises to the apical cell membrane. The protein resides in the cell membrane. It is found in the sarcolemma. The catalysed reaction is D-fructose(out) = D-fructose(in). Functionally, functions as a fructose transporter that has only low activity with other monosaccharides. Can mediate the uptake of deoxyglucose, but with low efficiency. Essential for fructose uptake in the small intestine. Plays a role in the regulation of salt uptake and blood pressure in response to dietary fructose. Required for the development of high blood pressure in response to high dietary fructose intake. In Pongo abelii (Sumatran orangutan), this protein is Solute carrier family 2, facilitated glucose transporter member 5.